An 868-amino-acid polypeptide reads, in one-letter code: Monofunctional pimaradiene synthase (868 aa).

Mg(2+)-binding residues include D620, D624, N764, T768, and E772.

This sequence belongs to the terpene synthase family. Tpsd subfamily. It depends on Mg(2+) as a cofactor.

It carries out the reaction (+)-copalyl diphosphate = (-)-pimara-8(14),15-diene + diphosphate. It participates in terpene metabolism; oleoresin biosynthesis. In terms of biological role, involved in defensive oleoresin formation in conifers in response to insect attack or other injury. Involved in diterpene (C20) olefins biosynthesis. Monofunctional enzyme lacking the DXDD motif in the class II active site relevant for the cyclization of geranylgeranyl diphosphate (GGPP). Requires (+)-copalyl diphosphate ((+)-CPP) as substrate, but no activity with GGPP or ent-CPP. Pimaradiene is the major products of the enzyme. This is Monofunctional pimaradiene synthase from Pinus contorta (Shore pine).